Reading from the N-terminus, the 253-residue chain is uncharacterized protein (253 aa).

S-adenosyl-L-methionine is bound by residues Gly-45, 66 to 67, 94 to 95, and Arg-110; these read DA and AE.

It belongs to the methyltransferase superfamily.

This is an uncharacterized protein from Bacillus subtilis (strain 168).